Reading from the N-terminus, the 276-residue chain is Pantothenate synthetase (276 aa).

26-33 (MGYLHEGH) provides a ligand contact to ATP. His-33 acts as the Proton donor in catalysis. Gln-57 serves as a coordination point for (R)-pantoate. Residue Gln-57 participates in beta-alanine binding. 142–145 (GLKD) lines the ATP pocket. Gln-148 contributes to the (R)-pantoate binding site. Residues Ile-171 and 179–182 (KSSR) each bind ATP.

This sequence belongs to the pantothenate synthetase family. As to quaternary structure, homodimer.

It localises to the cytoplasm. It carries out the reaction (R)-pantoate + beta-alanine + ATP = (R)-pantothenate + AMP + diphosphate + H(+). It functions in the pathway cofactor biosynthesis; (R)-pantothenate biosynthesis; (R)-pantothenate from (R)-pantoate and beta-alanine: step 1/1. Its function is as follows. Catalyzes the condensation of pantoate with beta-alanine in an ATP-dependent reaction via a pantoyl-adenylate intermediate. This is Pantothenate synthetase from Exiguobacterium sp. (strain ATCC BAA-1283 / AT1b).